A 527-amino-acid chain; its full sequence is Peptide chain release factor 3 (527 aa).

The 269-residue stretch at 9–277 (AKRRTFAIIS…AVVDWAPRPL (269 aa)) folds into the tr-type G domain. GTP is bound by residues 18-25 (SHPDAGKT), 86-90 (DTPGH), and 140-143 (NKLD).

The protein belongs to the TRAFAC class translation factor GTPase superfamily. Classic translation factor GTPase family. PrfC subfamily.

The protein localises to the cytoplasm. Increases the formation of ribosomal termination complexes and stimulates activities of RF-1 and RF-2. It binds guanine nucleotides and has strong preference for UGA stop codons. It may interact directly with the ribosome. The stimulation of RF-1 and RF-2 is significantly reduced by GTP and GDP, but not by GMP. In Pseudomonas putida (strain ATCC 47054 / DSM 6125 / CFBP 8728 / NCIMB 11950 / KT2440), this protein is Peptide chain release factor 3.